Reading from the N-terminus, the 262-residue chain is Putative hydro-lyase cu1581 (262 aa).

It belongs to the D-glutamate cyclase family.

The polypeptide is Putative hydro-lyase cu1581 (Corynebacterium urealyticum (strain ATCC 43042 / DSM 7109)).